Reading from the N-terminus, the 158-residue chain is NAD(P)H-quinone oxidoreductase subunit J, chloroplastic (158 aa).

The protein belongs to the complex I 30 kDa subunit family. In terms of assembly, NDH is composed of at least 16 different subunits, 5 of which are encoded in the nucleus.

It is found in the plastid. It localises to the chloroplast thylakoid membrane. The enzyme catalyses a plastoquinone + NADH + (n+1) H(+)(in) = a plastoquinol + NAD(+) + n H(+)(out). It catalyses the reaction a plastoquinone + NADPH + (n+1) H(+)(in) = a plastoquinol + NADP(+) + n H(+)(out). NDH shuttles electrons from NAD(P)H:plastoquinone, via FMN and iron-sulfur (Fe-S) centers, to quinones in the photosynthetic chain and possibly in a chloroplast respiratory chain. The immediate electron acceptor for the enzyme in this species is believed to be plastoquinone. Couples the redox reaction to proton translocation, and thus conserves the redox energy in a proton gradient. This Chloranthus spicatus (Chulantree) protein is NAD(P)H-quinone oxidoreductase subunit J, chloroplastic.